The chain runs to 597 residues: Lipoprotein LpqB (597 aa).

The N-terminal stretch at methionine 1–glycine 28 is a signal peptide. Cysteine 29 is lipidated: N-palmitoyl cysteine. The S-diacylglycerol cysteine moiety is linked to residue cysteine 29. Over residues proline 38 to serine 51 the composition is skewed to polar residues. Residues proline 38 to proline 58 are disordered.

The protein belongs to the LpqB lipoprotein family.

The protein resides in the cell membrane. The protein is Lipoprotein LpqB of Rhodococcus jostii (strain RHA1).